Consider the following 672-residue polypeptide: F(420)H(2) dehydrogenase subunit L (672 aa).

16 helical membrane passes run 8–28 (EFAF…FFFG), 37–57 (IVPI…TLGL), 79–99 (ILID…SLLI), 136–156 (ILQL…LIGF), 179–199 (VMFL…SGGF), 225–245 (ILGF…GGAV), 265–285 (TTVS…YLVA), 298–318 (LMVV…MGIV), 337–357 (MMLG…ISLF), 360–380 (INHA…IHAV), 394–414 (VMPI…GFGI), 447–467 (YVFS…LIFM), 483–503 (PAIM…FGAL), 545–565 (LAVL…AFVI), 601–621 (FSIG…DVII), and 652–672 (TALI…MEVL).

The protein belongs to the complex I subunit 5 family. As to quaternary structure, the FPO complex is composed of at least 13 different subunits. FpoA, FpoH, FpoJ, FpoK, FpoL, FpoM and FpoN proteins constitute the membrane sector of the complex.

The protein localises to the cell membrane. It catalyses the reaction methanophenazine + reduced coenzyme F420-(gamma-L-Glu)(n) = dihydromethanophenazine + oxidized coenzyme F420-(gamma-L-Glu)(n) + H(+). Functionally, component of the F(420)H(2) dehydrogenase (FPO complex) which is part of the energy-conserving F(420)H(2):heterodisulfide oxidoreductase system. The membrane-bound electron transfer system of the complex plays an important role in the metabolism of methylotrophic methanogens when the organisms grow on methanol or methylamines. Catalyzes the oxidation of methanophenazine to dihydromethanophenazine. It shuttles electrons from F(420)H(2), via FAD and iron-sulfur (Fe-S) centers, to methanophenazine (an electron carrier in the membrane). It couples the redox reaction to proton translocation (for every two electrons transferred, two hydrogen ions are translocated across the cytoplasmic membrane), and thus conserves the redox energy in a proton gradient. It also catalyzes the oxidation of F(420)H(2) with quinones such as 2,3-dimethyl-1,4-naphthoquinone, 2-methyl-1,4-naphthoquinone and tetramethyl-p-benzoquinone. This Methanosarcina mazei (strain ATCC BAA-159 / DSM 3647 / Goe1 / Go1 / JCM 11833 / OCM 88) (Methanosarcina frisia) protein is F(420)H(2) dehydrogenase subunit L (fpoL).